The sequence spans 55 residues: PI-stichotoxin-She2b (55 aa).

The BPTI/Kunitz inhibitor domain maps to 3 to 53 (CLEPKRVGRCKGYFPRFYFDSKTGKCTPFIYGGCGGNGNNFETLHQCRAIC). 3 disulfides stabilise this stretch: cysteine 3-cysteine 53, cysteine 12-cysteine 36, and cysteine 28-cysteine 49.

It belongs to the venom Kunitz-type family. Sea anemone type 2 potassium channel toxin subfamily.

It is found in the secreted. It localises to the nematocyst. Functionally, inhibitor of serine, cysteine, and aspartic proteinases. The sequence is that of PI-stichotoxin-She2b from Stichodactyla helianthus (Sun anemone).